Reading from the N-terminus, the 563-residue chain is MGLQACLLGLFALILSGKCSYSPEPDQRRTLPPGWVSLGRADPEEELSLTFALRQQNVERLSELVQAVSDPSSPQYGKYLTLENVADLVRPSPLTLHTVQKWLLAAGAQKCHSVITQDFLTCWLSIRQAELLLPGAEFHHYVGGPTETHVVRSPHPYQLPQALAPHVDFVGGLHRFPPTSSLRQRPEPQVTGTVGLHLGVTPSVIRKRYNLTSQDVGSGTSNNSQACAQFLEQYFHDSDLAQFMRLFGGNFAHQASVARVVGQQGRGRAGIEASLDVQYLMSAGANISTWVYSSPGRHEGQEPFLQWLMLLSNESALPHVHTVSYGDDEDSLSSAYIQRVNTELMKAAARGLTLLFASGDSGAGCWSVSGRHQFRPTFPASSPYVTTVGGTSFQEPFLITNEIVDYISGGGFSNVFPRPSYQEEAVTKFLSSSPHLPPSSYFNASGRAYPDVAALSDGYWVVSNRVPIPWVSGTSASTPVFGGILSLINEHRILSGRPPLGFLNPRLYQQHGAGLFDVTRGCHESCLDEEVEGQGFCSGPGWDPVTGWGTPNFPALLKTLLNP.

Residues 1–19 (MGLQACLLGLFALILSGKC) form the signal peptide. The propeptide at 20–195 (SYSPEPDQRR…PEPQVTGTVG (176 aa)) is removed in mature form. Cysteines 111 and 122 form a disulfide. The 365-residue stretch at 199 to 563 (GVTPSVIRKR…PALLKTLLNP (365 aa)) folds into the Peptidase S53 domain. N-linked (GlcNAc...) asparagine glycosylation is found at Asn-210 and Asn-222. Catalysis depends on charge relay system residues Glu-272 and Asp-276. N-linked (GlcNAc...) asparagine glycosylation is found at Asn-286, Asn-313, and Asn-443. 2 disulfide bridges follow: Cys-365–Cys-526 and Cys-522–Cys-537. Ser-475 (charge relay system) is an active-site residue. Ca(2+) contacts are provided by Asp-517 and Val-518. Ca(2+) contacts are provided by Gly-539, Gly-541, and Asp-543.

As to quaternary structure, monomer. Interacts with CLN5. Interacts with CLN3. Ca(2+) serves as cofactor. Post-translationally, activated by autocatalytic proteolytical processing upon acidification. N-glycosylation is required for processing and activity. Detected in all tissues examined with highest levels in heart and placenta and relatively similar levels in other tissues.

The protein resides in the lysosome. The protein localises to the melanosome. It catalyses the reaction Release of an N-terminal tripeptide from a polypeptide, but also has endopeptidase activity.. Its activity is regulated as follows. Inhibited by diisopropyl fluorophosphate (DFP). Its function is as follows. Lysosomal serine protease with tripeptidyl-peptidase I activity. May act as a non-specific lysosomal peptidase which generates tripeptides from the breakdown products produced by lysosomal proteinases. Requires substrates with an unsubstituted N-terminus. The protein is Tripeptidyl-peptidase 1 (TPP1) of Homo sapiens (Human).